We begin with the raw amino-acid sequence, 311 residues long: Ribonuclease Z (311 aa).

Zn(2+) contacts are provided by H61, H63, D65, H66, H148, D216, and H275. The Proton acceptor role is filled by D65.

It belongs to the RNase Z family. Homodimer. Zn(2+) is required as a cofactor.

It carries out the reaction Endonucleolytic cleavage of RNA, removing extra 3' nucleotides from tRNA precursor, generating 3' termini of tRNAs. A 3'-hydroxy group is left at the tRNA terminus and a 5'-phosphoryl group is left at the trailer molecule.. In terms of biological role, zinc phosphodiesterase, which displays some tRNA 3'-processing endonuclease activity. Probably involved in tRNA maturation, by removing a 3'-trailer from precursor tRNA. This Clostridium novyi (strain NT) protein is Ribonuclease Z.